Consider the following 436-residue polypeptide: 3-ketoacyl-CoA thiolase (436 aa).

Catalysis depends on Cys99, which acts as the Acyl-thioester intermediate. Active-site proton acceptor residues include His392 and Cys422.

This sequence belongs to the thiolase-like superfamily. Thiolase family. Heterotetramer of two alpha chains (FadJ) and two beta chains (FadI).

It localises to the cytoplasm. The enzyme catalyses an acyl-CoA + acetyl-CoA = a 3-oxoacyl-CoA + CoA. It participates in lipid metabolism; fatty acid beta-oxidation. Catalyzes the final step of fatty acid oxidation in which acetyl-CoA is released and the CoA ester of a fatty acid two carbons shorter is formed. The protein is 3-ketoacyl-CoA thiolase of Photobacterium profundum (strain SS9).